Consider the following 483-residue polypeptide: MKTLNRRDFPGAQYPDRIIQFGEGNFLRAFVDWQIDLLNEHTDLNAGIVVVRPIATDFPPSLNTQDGLYTTIIRGLNEQGEAVSDARLIRSVNREISAYADFDAFLRLAHNPEMRFVFSNTTEAGISYHAGDRFDDAPPVSYPAKLTRLLFERYQHFAGAADKGWVIIPCELIDYNGEALQALVLRYASEWELPQAFITWLTSANTFCSTLVDRIVTGYPRDEVAALEAQTGYKDAFLDTAEHFYLFVIQGPASLAAELRLDKLPLNVRIVDDIKPYKERKVAILNGAHTALVPVAFQAGIDTVGEAMNDAEICAFVEKAIYDEIIPVLDLPRDELVSFASAVTGRFRNPYIKHQLLSIALNGMTKYRTRILPQLLAGQKAHGALPPRLTFALAALIAFYRGERDGESYPVQDDADWISRYQTLWARHRDGQMSTRELVTAVLSVADHWQQDLSQTPGLVELVTADLDAILTCGMRDAVKPLC.

Position 18 to 29 (18 to 29 (IIQFGEGNFLRA)) interacts with NAD(+).

This sequence belongs to the mannitol dehydrogenase family. UxaB subfamily.

It catalyses the reaction D-altronate + NAD(+) = keto-D-tagaturonate + NADH + H(+). The protein operates within carbohydrate metabolism; pentose and glucuronate interconversion. This chain is Altronate oxidoreductase, found in Klebsiella pneumoniae subsp. pneumoniae (strain ATCC 700721 / MGH 78578).